The following is an 890-amino-acid chain: Alanine--tRNA ligase (890 aa).

4 residues coordinate Zn(2+): His572, His576, Cys674, and His678.

The protein belongs to the class-II aminoacyl-tRNA synthetase family. Zn(2+) is required as a cofactor.

Its subcellular location is the cytoplasm. The enzyme catalyses tRNA(Ala) + L-alanine + ATP = L-alanyl-tRNA(Ala) + AMP + diphosphate. Catalyzes the attachment of alanine to tRNA(Ala) in a two-step reaction: alanine is first activated by ATP to form Ala-AMP and then transferred to the acceptor end of tRNA(Ala). Also edits incorrectly charged Ser-tRNA(Ala) and Gly-tRNA(Ala) via its editing domain. This chain is Alanine--tRNA ligase, found in Saccharopolyspora erythraea (strain ATCC 11635 / DSM 40517 / JCM 4748 / NBRC 13426 / NCIMB 8594 / NRRL 2338).